The following is a 200-amino-acid chain: Holliday junction branch migration complex subunit RuvA (200 aa).

The domain I stretch occupies residues 1–64 (MIGHLRGIIV…EDAHTLYGFH (64 aa)). The tract at residues 65 to 143 (NDHERRLFRA…RWHTNDTPSP (79 aa)) is domain II. A flexible linker region spans residues 144–148 (EGLRS). The tract at residues 149 to 200 (SNTQPTQDAISALMALGYKPQEAKRAIDAIQKPDLSAETLIRLALKQMVLGT) is domain III.

This sequence belongs to the RuvA family. Homotetramer. Forms an RuvA(8)-RuvB(12)-Holliday junction (HJ) complex. HJ DNA is sandwiched between 2 RuvA tetramers; dsDNA enters through RuvA and exits via RuvB. An RuvB hexamer assembles on each DNA strand where it exits the tetramer. Each RuvB hexamer is contacted by two RuvA subunits (via domain III) on 2 adjacent RuvB subunits; this complex drives branch migration. In the full resolvosome a probable DNA-RuvA(4)-RuvB(12)-RuvC(2) complex forms which resolves the HJ.

The protein localises to the cytoplasm. Functionally, the RuvA-RuvB-RuvC complex processes Holliday junction (HJ) DNA during genetic recombination and DNA repair, while the RuvA-RuvB complex plays an important role in the rescue of blocked DNA replication forks via replication fork reversal (RFR). RuvA specifically binds to HJ cruciform DNA, conferring on it an open structure. The RuvB hexamer acts as an ATP-dependent pump, pulling dsDNA into and through the RuvAB complex. HJ branch migration allows RuvC to scan DNA until it finds its consensus sequence, where it cleaves and resolves the cruciform DNA. The protein is Holliday junction branch migration complex subunit RuvA of Coxiella burnetii (strain CbuG_Q212) (Coxiella burnetii (strain Q212)).